Here is a 162-residue protein sequence, read N- to C-terminus: Ribonuclease P protein component (162 aa).

The tract at residues 1 to 63 is disordered; that stretch reads MDEKDLATQP…PPAAGGKLLS (63 aa). Residues 21-38 are compositionally biased toward basic and acidic residues; sequence GPHEDPRRQEGVEAEKAE.

Belongs to the RnpA family. Consists of a catalytic RNA component (M1 or rnpB) and a protein subunit.

It catalyses the reaction Endonucleolytic cleavage of RNA, removing 5'-extranucleotides from tRNA precursor.. In terms of biological role, RNaseP catalyzes the removal of the 5'-leader sequence from pre-tRNA to produce the mature 5'-terminus. It can also cleave other RNA substrates such as 4.5S RNA. The protein component plays an auxiliary but essential role in vivo by binding to the 5'-leader sequence and broadening the substrate specificity of the ribozyme. This is Ribonuclease P protein component from Thermus scotoductus.